Consider the following 155-residue polypeptide: UPF0260 protein Smed_0627 (155 aa).

This sequence belongs to the UPF0260 family.

The protein is UPF0260 protein Smed_0627 of Sinorhizobium medicae (strain WSM419) (Ensifer medicae).